An 88-amino-acid chain; its full sequence is Class II hydrophobin 5 (88 aa).

Residues 1 to 14 (MQFLVLALASLAAA) form the signal peptide. Cystine bridges form between Cys-27/Cys-73, Cys-35/Cys-64, Cys-36/Cys-48, and Cys-74/Cys-85.

The protein belongs to the cerato-ulmin hydrophobin family. In terms of assembly, homotetramer. Further self-assembles to form highly ordered films at water-air interfaces through intermolecular interactions. As to expression, only appears on young aerial hyphae. HCf-5 is the most abundant transcript in sporulating mycelium.

It localises to the secreted. Its subcellular location is the cell wall. In terms of biological role, aerial growth, conidiation, and dispersal of filamentous fungi in the environment rely upon a capability of their secreting small amphipathic proteins called hydrophobins (HPBs) with low sequence identity. Class I can self-assemble into an outermost layer of rodlet bundles on aerial cell surfaces, conferring cellular hydrophobicity that supports fungal growth, development and dispersal; whereas Class II form highly ordered films at water-air interfaces through intermolecular interactions but contribute nothing to the rodlet structure. In Passalora fulva (Tomato leaf mold), this protein is Class II hydrophobin 5.